We begin with the raw amino-acid sequence, 432 residues long: Adenylosuccinate synthetase (432 aa).

GTP is bound by residues 13-19 (GDEGKGK) and 41-43 (GHT). Asp14 (proton acceptor) is an active-site residue. Mg(2+) is bound by residues Asp14 and Gly41. Residues 14–17 (DEGK), 39–42 (NAGH), Thr130, Arg144, Gln225, Thr240, and Arg304 contribute to the IMP site. Catalysis depends on His42, which acts as the Proton donor. Residue 300-306 (STTGRRR) coordinates substrate. GTP contacts are provided by residues Arg306, 332–334 (KID), and 415–417 (STG).

The protein belongs to the adenylosuccinate synthetase family. As to quaternary structure, homodimer. Mg(2+) is required as a cofactor.

The protein resides in the cytoplasm. The enzyme catalyses IMP + L-aspartate + GTP = N(6)-(1,2-dicarboxyethyl)-AMP + GDP + phosphate + 2 H(+). The protein operates within purine metabolism; AMP biosynthesis via de novo pathway; AMP from IMP: step 1/2. Functionally, plays an important role in the de novo pathway of purine nucleotide biosynthesis. Catalyzes the first committed step in the biosynthesis of AMP from IMP. The protein is Adenylosuccinate synthetase of Blochmanniella pennsylvanica (strain BPEN).